Consider the following 333-residue polypeptide: Arylacetonitrilase (333 aa).

Positions 9 to 284 (VRVAVTQAEP…EGIIYADLEM (276 aa)) constitute a CN hydrolase domain. Glu49 (proton acceptor) is an active-site residue. Residue Lys129 is part of the active site. The active-site Nucleophile is Cys164.

This sequence belongs to the carbon-nitrogen hydrolase superfamily. Nitrilase family.

The catalysed reaction is a nitrile + 2 H2O = a carboxylate + NH4(+). The enzyme catalyses 4-chlorophenylacetonitrile + 2 H2O = 4-chlorophenylacetate + NH4(+). Nitrilase that hydrolyzes preferentially phenylacetonitrile, (R,S)-mandelonitrile, and 3-indolylacetonitrile. The sequence is that of Arylacetonitrilase from Aspergillus oryzae (strain ATCC 42149 / RIB 40) (Yellow koji mold).